Consider the following 310-residue polypeptide: Probable L,D-transpeptidase ErfK/SrfK (310 aa).

An N-terminal signal peptide occupies residues 1 to 21 (MRRVNILCSFALLFASHTSLA). One can recognise a L,D-TPase catalytic domain in the interval 96 to 231 (KGIVVNVAEM…VPVGTRVQII (136 aa)). The active-site Proton donor/acceptor is His191. Catalysis depends on Cys207, which acts as the Nucleophile.

The protein belongs to the YkuD family. In terms of assembly, interacts with DsbG.

The protein localises to the periplasm. It functions in the pathway cell wall biogenesis; peptidoglycan biosynthesis. Responsible, at least in part, for anchoring of the major outer membrane lipoprotein (Lpp, also known as the Braun lipoprotein) to the peptidoglycan via a meso-diaminopimelyl-L-Lys- bond on the terminal residue of Lpp. The chain is Probable L,D-transpeptidase ErfK/SrfK (erfK) from Escherichia coli (strain K12).